Reading from the N-terminus, the 84-residue chain is NAD(P)H-quinone oxidoreductase subunit O (84 aa).

This sequence belongs to the complex I NdhO subunit family. In terms of assembly, NDH-1 can be composed of about 15 different subunits; different subcomplexes with different compositions have been identified which probably have different functions.

It is found in the cellular thylakoid membrane. The catalysed reaction is a plastoquinone + NADH + (n+1) H(+)(in) = a plastoquinol + NAD(+) + n H(+)(out). The enzyme catalyses a plastoquinone + NADPH + (n+1) H(+)(in) = a plastoquinol + NADP(+) + n H(+)(out). Functionally, NDH-1 shuttles electrons from an unknown electron donor, via FMN and iron-sulfur (Fe-S) centers, to quinones in the respiratory and/or the photosynthetic chain. The immediate electron acceptor for the enzyme in this species is believed to be plastoquinone. Couples the redox reaction to proton translocation, and thus conserves the redox energy in a proton gradient. Cyanobacterial NDH-1 also plays a role in inorganic carbon-concentration. The sequence is that of NAD(P)H-quinone oxidoreductase subunit O from Synechococcus sp. (strain CC9605).